Here is a 581-residue protein sequence, read N- to C-terminus: Fibrous sheath-interacting protein 1 (581 aa).

Positions 1 to 77 (MDIIKGNLDG…SNDDKQESCS (77 aa)) are disordered. Residues 14 to 30 (PASNSRIRPGSRSSNAS) are compositionally biased toward polar residues. Over residues 52 to 77 (GKEDHSESSNTENRRTSNDDKQESCS) the composition is skewed to basic and acidic residues. Serine 87 carries the post-translational modification Phosphoserine. Positions 105–153 (EPKLKELDSQLQDAIQKMKKLDKILAKKQRREKEIKKQGLEMRIKLWEE) form a coiled coil. 2 disordered regions span residues 338–365 (SSFS…VTPG) and 555–581 (HLKL…CKEP). Composition is skewed to basic and acidic residues over residues 344–360 (LENR…ERNM) and 569–581 (QETK…CKEP).

It belongs to the FSIP1 family.

The chain is Fibrous sheath-interacting protein 1 (FSIP1) from Homo sapiens (Human).